A 1192-amino-acid chain; its full sequence is DNA topoisomerase 2 (1192 aa).

ATP-binding positions include Asn-64, Asn-95, and 142 to 149 (GTNGVGLK). Residues Glu-438, Asp-539, and Asp-541 each contribute to the Mg(2+) site. The Topo IIA-type catalytic domain maps to 707–1174 (IPNFLDGMTR…PGASVWLEEI (468 aa)). Catalysis depends on Tyr-800, which acts as the O-(5'-phospho-DNA)-tyrosine intermediate.

Belongs to the type II topoisomerase family. Mg(2+) serves as cofactor. Mn(2+) is required as a cofactor. Requires Ca(2+) as cofactor.

It localises to the host cytoplasm. It carries out the reaction ATP-dependent breakage, passage and rejoining of double-stranded DNA.. In terms of biological role, type II topoisomerase. Processively relaxes supercoiled DNA. Displays DNA-supercoiling activity only when associated with the viral histone-like protein. This is DNA topoisomerase 2 from African swine fever virus (isolate Tick/South Africa/Pretoriuskop Pr4/1996) (ASFV).